Here is a 277-residue protein sequence, read N- to C-terminus: tRNA pseudouridine synthase B (277 aa).

Asp-38 functions as the Nucleophile in the catalytic mechanism.

This sequence belongs to the pseudouridine synthase TruB family. Type 1 subfamily.

The enzyme catalyses uridine(55) in tRNA = pseudouridine(55) in tRNA. Responsible for synthesis of pseudouridine from uracil-55 in the psi GC loop of transfer RNAs. In Sulfurovum sp. (strain NBC37-1), this protein is tRNA pseudouridine synthase B.